The sequence spans 663 residues: Polyunsaturated fatty acid lipoxygenase ALOX15 (663 aa).

The PLAT domain maps to 2-115 (GLYRVRVSTG…ILSLPEGTGR (114 aa)). Residues 116–663 (TVVDDPQGLF…PSLVENSVAI (548 aa)) form the Lipoxygenase domain. Residues H361, H366, H541, H545, and I663 each coordinate Fe cation.

Belongs to the lipoxygenase family. As to quaternary structure, interacts with PEBP1; in response to IL13/interleukin-13, prevents the interaction of PEBP1 with RAF1 to activate the ERK signaling cascade. The cofactor is Fe cation. In terms of tissue distribution, detected in tracheal epithelium.

Its subcellular location is the cytoplasm. It is found in the cytosol. The protein resides in the cell membrane. It localises to the lipid droplet. It catalyses the reaction (5Z,8Z,11Z,14Z)-eicosatetraenoate + O2 = (12S)-hydroperoxy-(5Z,8Z,10E,14Z)-eicosatetraenoate. The catalysed reaction is (5Z,8Z,11Z,14Z)-eicosatetraenoate + O2 = (15S)-hydroperoxy-(5Z,8Z,11Z,13E)-eicosatetraenoate. It carries out the reaction (9Z,12Z)-octadecadienoate + O2 = (13S)-hydroperoxy-(9Z,11E)-octadecadienoate. The enzyme catalyses (5Z,8Z,11Z,14Z)-eicosatetraenoate + 2 O2 = (14R,15S)-dihydroperoxy-(5Z,8Z,10E,12E)-eicosatetraenoate. It catalyses the reaction (5Z,8Z,11Z,14Z)-eicosatetraenoate + 2 O2 = (8S,15S)-dihydroperoxy-(5Z,9E,11Z,13E)-eicosatetraenoate. The catalysed reaction is (14S,15R)-epoxy-(5Z,8Z,11Z)-eicosatrienoate + O2 = (8S)-hydroperoxy-(14S,15R)-epoxy-(5Z,9E,11Z)-eicosatrienoate. It carries out the reaction (14S,15R)-epoxy-(5Z,8Z,11Z)-eicosatrienoate + O2 = (12S)-hydroperoxy-(14S,15R)-epoxy-(5Z,8Z,10E)-eicosatrienoate. The enzyme catalyses (14R,15S)-epoxy-(5Z,8Z,11Z)-eicosatrienoate + O2 = (5S)-hydroperoxy-(14R,15S)-epoxy-(6E,8Z,11Z)-eicosatrienoate. It catalyses the reaction (14R,15S)-epoxy-(5Z,8Z,11Z)-eicosatrienoate + O2 = (12S)-hydroperoxy-(14R,15S)-epoxy-(5Z,8Z,10E)-eicosatrienoate. The catalysed reaction is (15R)-hydroperoxy-(5Z,8Z,11Z,13E)-eicosatetraenoate = 15-oxo-(5Z,8Z,11Z,13E)-eicosatetraenoate + H2O. It carries out the reaction (15S)-hydroperoxy-(5Z,8Z,11Z,13E)-eicosatetraenoate = (14S,15S)-epoxy-(5Z,8Z,10E,12E)-eicosatetraenoate + H2O. The enzyme catalyses (12S)-hydroperoxy-(5Z,8Z,10E,14Z)-eicosatetraenoate = (8S)-hydroxy-(11S,12S)-epoxy-(5Z,9E,14Z)-eicosatrienoate. It catalyses the reaction (4Z,7Z,10Z,13Z,16Z)-docosapentaenoate + O2 = 14-hydroperoxy-(4Z,7Z,10Z,12E,16Z)-docosapentaenoate. The catalysed reaction is (7Z,10Z,13Z,16Z,19Z)-docosapentaenoate + O2 = 14-hydroperoxy-(7Z,10Z,12E,16Z,19Z)-docosapentaenoate. It carries out the reaction (4Z,7Z,10Z,13Z,16Z,19Z)-docosahexaenoate + O2 = (14S)-hydroperoxy-(4Z,7Z,10Z,12E,16Z,19Z)-docosahexaenoate. The enzyme catalyses (4Z,7Z,10Z,13Z,16Z,19Z)-docosahexaenoate + O2 = (17S)-hydroperoxy-(4Z,7Z,10Z,13Z,15E,19Z)-docosahexaenoate. It catalyses the reaction (7S)-hydroperoxy-(4Z,8E,10Z,13Z,16Z,19Z)-docosahexaenoate + O2 = (7S,14S)-dihydroperoxy-(4Z,8E,10Z,12E,16Z,19Z)-docosahexaenoate. The catalysed reaction is (7S)-hydroperoxy-(4Z,8E,10Z,13Z,16Z,19Z)-docosahexaenoate + O2 = (7S,17S)-dihydroperoxy-(4Z,8E,10Z,13Z,15E,19Z)-docosahexaenoate. It carries out the reaction (4Z,7Z,10Z,13Z,16Z,19Z)-docosahexaenoate + O2 = (11S)-hydroperoxy-(4Z,7Z,9E,13Z,16Z,19Z)-docosahexaenoate. The enzyme catalyses N-(5Z,8Z,11Z,14Z)-eicosatetraenoyl-taurine + O2 = N-(12S)-hydroperoxy-(5Z,8Z,10E,14Z)-eicosatetraenoyl-taurine. It catalyses the reaction N-(5Z,8Z,11Z,14Z)-eicosatetraenoyl-gamma-aminobutanoate + O2 = N-(12S)-hydroperoxy-(5Z,8Z,10E,14Z)-eicosatetraenoyl-gamma-aminobutanoate. The catalysed reaction is N-(5Z,8Z,11Z,14Z)-eicosatetraenoyl-glycine + O2 = N-(12S)-hydroperoxy-(5Z,8Z,10E,14Z)-eicosatetraenoyl-glycine. It carries out the reaction N-(5Z,8Z,11Z,14Z)-eicosatetraenoyl-L-alanine + O2 = N-(12S)-hydroperoxy-(5Z,8Z,10E,14Z)-eicosatetraenoyl-alanine. The enzyme catalyses N-(5Z,8Z,11Z,14Z)-eicosatetraenoyl-taurine + O2 = N-(15S)-hydroperoxy-(5Z,8Z,11Z,13E)-eicosatetraenoyl-taurine. It catalyses the reaction N-(5Z,8Z,11Z,14Z)-eicosatetraenoyl-gamma-aminobutanoate + O2 = N-(15S)-hydroperoxy-(5Z,8Z,11Z,13E)-eicosatetraenoyl-gamma-aminobutanoate. The catalysed reaction is N-(5Z,8Z,11Z,14Z)-eicosatetraenoyl-glycine + O2 = N-(15S)-hydroperoxy-(5Z,8Z,11Z,13E)-eicosatetraenoyl-glycine. It carries out the reaction N-(5Z,8Z,11Z,14Z)-eicosatetraenoyl-L-alanine + O2 = N-(15S)-hydroperoxy-(5Z,8Z,11Z,13E)-eicosatetraenoyl-alanine. It functions in the pathway lipid metabolism; hydroperoxy eicosatetraenoic acid biosynthesis. Non-heme iron-containing dioxygenase that catalyzes the stereo-specific peroxidation of free and esterified polyunsaturated fatty acids generating a spectrum of bioactive lipid mediators. It inserts peroxyl groups at C12 or C15 of arachidonate ((5Z,8Z,11Z,14Z)-eicosatetraenoate) producing both 12-hydroperoxyeicosatetraenoate/12-HPETE and 15-hydroperoxyeicosatetraenoate/15-HPETE. It may then act on 12-HPETE to produce hepoxilins, which may show pro-inflammatory properties. Can also peroxidize linoleate ((9Z,12Z)-octadecadienoate) to 13-hydroperoxyoctadecadienoate. May participate in the sequential oxidations of DHA ((4Z,7Z,10Z,13Z,16Z,19Z)-docosahexaenoate) to generate specialized pro-resolving mediators (SPMs)like resolvin D5 ((7S,17S)-diHPDHA) and (7S,14S)-diHPDHA, that actively down-regulate the immune response and have anti-aggregation properties with platelets. Can convert epoxy fatty acids to hydroperoxy-epoxides derivatives followed by an intramolecular nucleophilic substitution leading to the formation of monocyclic endoperoxides. Plays an important role during the maintenance of self-tolerance by peroxidizing membrane-bound phosphatidylethanolamine which can then signal the sorting process for clearance of apoptotic cells during inflammation and prevent an autoimmune response. In addition to its role in the immune and inflammatory responses, this enzyme may play a role in epithelial wound healing in the cornea through production of lipoxin A4 (LXA(4)) and docosahexaenoic acid-derived neuroprotectin D1 (NPD1; 10R,17S-HDHA), both lipid autacoids exhibit anti-inflammatory and neuroprotective properties. Furthermore, it may regulate actin polymerization which is crucial for several biological processes such as the phagocytosis of apoptotic cells. It is also implicated in the generation of endogenous ligands for peroxisome proliferator activated receptor (PPAR-gamma), hence modulating macrophage development and function. It may also exert a negative effect on skeletal development by regulating bone mass through this pathway. As well as participates in ER stress and downstream inflammation in adipocytes, pancreatic islets, and liver. Finally, it is also involved in the cellular response to IL13/interleukin-13. This chain is Polyunsaturated fatty acid lipoxygenase ALOX15, found in Bos taurus (Bovine).